The primary structure comprises 225 residues: UPF0758 protein Vapar_4033 (225 aa).

The region spanning 103–225 is the MPN domain; that stretch reads VFDSPGTVKQ…SYSMAEKGLL (123 aa). Positions 174, 176, and 187 each coordinate Zn(2+). The JAMM motif motif lies at 174-187; sequence HNHPSGSIEPSRAD.

Belongs to the UPF0758 family.

The protein is UPF0758 protein Vapar_4033 of Variovorax paradoxus (strain S110).